The following is a 366-amino-acid chain: Flagellar P-ring protein (366 aa).

An N-terminal signal peptide occupies residues 1–22 (MFTRKSVILMAVLLIWSAVSYA).

The protein belongs to the FlgI family. In terms of assembly, the basal body constitutes a major portion of the flagellar organelle and consists of four rings (L,P,S, and M) mounted on a central rod.

The protein localises to the periplasm. Its subcellular location is the bacterial flagellum basal body. In terms of biological role, assembles around the rod to form the L-ring and probably protects the motor/basal body from shearing forces during rotation. This chain is Flagellar P-ring protein, found in Hydrogenovibrio crunogenus (strain DSM 25203 / XCL-2) (Thiomicrospira crunogena).